The chain runs to 343 residues: N-acetyl-gamma-glutamyl-phosphate reductase (343 aa).

Residue Cys-147 is part of the active site.

Belongs to the NAGSA dehydrogenase family. Type 1 subfamily.

It localises to the cytoplasm. It catalyses the reaction N-acetyl-L-glutamate 5-semialdehyde + phosphate + NADP(+) = N-acetyl-L-glutamyl 5-phosphate + NADPH + H(+). It participates in amino-acid biosynthesis; L-arginine biosynthesis; N(2)-acetyl-L-ornithine from L-glutamate: step 3/4. Catalyzes the NADPH-dependent reduction of N-acetyl-5-glutamyl phosphate to yield N-acetyl-L-glutamate 5-semialdehyde. In Listeria monocytogenes serotype 4b (strain F2365), this protein is N-acetyl-gamma-glutamyl-phosphate reductase.